We begin with the raw amino-acid sequence, 448 residues long: MLPKEDPELKKCKHKCRDERQFDEQQRRDGKQICEEKARERQQEEGNSSEESYGKEQEENPYVFQDEHFESRVKTEEGRVQVLENFTKRSRLLSGIENFRLAILEANPHTFISPAHFDAELVLFVAKGRATITMVREEKRESFNVEHGDIIRIPAGTPVYMINRDENEKLFIVKILQPVSAPGHFEAFYGAGGEDPESFYRAFSWEVLEAALKVRREQLEKVFGEQSKGSIVKASREKIRALSQHEEGPPRIWPFGGESSGPINLLHKHPSQSNQFGRLYEAHPDDHKQLQDLDLMVSFANITKGSMAGPYYNSRATKISVVVEGEGFFEMACPHLSSSSGSYQKISARLRRGVVFVAPAGHPVAVIASQNNNLQVLCFEVNAHGNSRFPLAGKGNIVNEFERDAKELAFNLPSREVERIFKNQDQAFFFPGPNKQQEEGGRGGRAFE.

A compositionally biased stretch (basic and acidic residues) spans 1-44 (MLPKEDPELKKCKHKCRDERQFDEQQRRDGKQICEEKARERQQE). The interval 1-66 (MLPKEDPELK…QEENPYVFQD (66 aa)) is disordered. An N-linked (GlcNAc...) asparagine glycan is attached at Asn47. 2 consecutive Cupin type-1 domains span residues 84-220 (ENFT…EQLE) and 263-418 (INLL…REVE). Residue Asn301 is glycosylated (N-linked (GlcNAc...) asparagine). Cu cation contacts are provided by Cys333, His335, and His362.

This sequence belongs to the 7S seed storage protein family. In terms of assembly, homotrimer. Homohexamer. In terms of processing, N-glycosylated at Asn-301 mostly with xylosylated paucimannosidic-type N-glycan MMX (an N-linked glycan with beta-1,2-xylose residue in the structure) and also with MMXF (a complex N-linked glycan with alpha-1,3-fucose and beta-1,2-xylose residues in the structure). Post-translationally, a mixture of proteolytically processed and unprocessed subunits exist. As to expression, expressed in seed (at protein level). Expressed in seed.

Functionally, seed storage protein. Does not have superoxide dismutase (SOD) activity. The sequence is that of Vicilin Cor a 11.0101 from Corylus avellana (European hazel).